The following is a 430-amino-acid chain: von Willebrand factor (430 aa).

Residue asparagine 6 is glycosylated (N-linked (GlcNAc...) asparagine). The cysteines at positions 9 and 12 are disulfide-linked. Threonine 23, threonine 30, and threonine 31 each carry an O-linked (GalNAc...) threonine glycan. Cysteine 47 and cysteine 233 are oxidised to a cystine. One can recognise a VWFA 1; binding site for platelet glycoprotein Ib domain in the interval 52–228; sequence DLVFLLDGSY…DELEQRRDEI (177 aa). Threonine 252 is a glycosylation site (O-linked (GalNAc...) threonine). Serine 261 is a glycosylation site (O-linked (GalNAc...) serine). The 158-residue stretch at 273 to 430 folds into the VWFA 2 domain; sequence DVVFVLEASD…ITPIFIQDFE (158 aa). 2 N-linked (GlcNAc...) asparagine glycosylation sites follow: asparagine 290 and asparagine 349.

As to quaternary structure, multimeric. Interacts with F8. N- and O-glycosylated. In terms of tissue distribution, plasma.

Its subcellular location is the secreted. The protein localises to the extracellular space. It is found in the extracellular matrix. Functionally, important in the maintenance of hemostasis, it promotes adhesion of platelets to the sites of vascular injury by forming a molecular bridge between sub-endothelial collagen matrix and platelet-surface receptor complex GPIb-IX-V. Also acts as a chaperone for coagulation factor VIII, delivering it to the site of injury, stabilizing its heterodimeric structure and protecting it from premature clearance from plasma. The sequence is that of von Willebrand factor from Rattus norvegicus (Rat).